A 133-amino-acid chain; its full sequence is Small ribosomal subunit protein uS8 (133 aa).

This sequence belongs to the universal ribosomal protein uS8 family. Part of the 30S ribosomal subunit. Contacts proteins S5 and S12.

In terms of biological role, one of the primary rRNA binding proteins, it binds directly to 16S rRNA central domain where it helps coordinate assembly of the platform of the 30S subunit. This chain is Small ribosomal subunit protein uS8, found in Prochlorococcus marinus (strain MIT 9312).